The primary structure comprises 274 residues: Serine protease 28 (274 aa).

The first 26 residues, 1-26 (MFRLLLLALSCLESTVFMASVSISRS), serve as a signal peptide directing secretion. One can recognise a Peptidase S1 domain in the interval 31 to 274 (IVGGQRTPPG…SLAWIHQHIQ (244 aa)). C62 and C78 are disulfide-bonded. H77 acts as the Charge relay system in catalysis. A glycan (N-linked (GlcNAc...) asparagine) is linked at N106. The active-site Charge relay system is the D124. 3 cysteine pairs are disulfide-bonded: C158–C233, C191–C214, and C223–C251. The active-site Charge relay system is the S227.

Belongs to the peptidase S1 family. In terms of assembly, homooligomer, heterodimer and heterotetramer. Able to form homo- and hetero- tetrameric structures. Heterotetramer is far more stable than the homotetramer. As to expression, expressed in embryos throughout the preimplantation period, during blastocyst hatching and embryo outgrowth. Found in uterus especially in glandular epithelium.

The protein localises to the secreted. Inhibited by benzamidine, (4-amidino-phenyl)-methane-sulfonyl (APMSF), N-p-tosyl-L-lysine chloromethylketone (TLCK), gabexate, mesylate, BABIM and trypsin soybean inhibitor (TSI). Its function is as follows. Involved in embryo hatching and implantation. The polypeptide is Serine protease 28 (Prss28) (Mus musculus (Mouse)).